A 412-amino-acid polypeptide reads, in one-letter code: Dihydrolipoyllysine-residue acetyltransferase component of pyruvate dehydrogenase complex (412 aa).

A Lipoyl-binding domain is found at 2-78 (PIKILMPALS…PVNSLIAVLS (77 aa)). Position 43 is an N6-lipoyllysine (Lys-43). The Peripheral subunit-binding (PSBD) domain occupies 132 to 169 (FASPLAKRLAKMRNIRFESVKGSGPHGRIVKQDILSYT). The active site involves His-385.

The protein belongs to the 2-oxoacid dehydrogenase family. As to quaternary structure, forms a 24-polypeptide structural core with octahedral symmetry. (R)-lipoate serves as cofactor.

It catalyses the reaction N(6)-[(R)-dihydrolipoyl]-L-lysyl-[protein] + acetyl-CoA = N(6)-[(R)-S(8)-acetyldihydrolipoyl]-L-lysyl-[protein] + CoA. In terms of biological role, the pyruvate dehydrogenase complex catalyzes the overall conversion of pyruvate to acetyl-CoA and CO(2). It contains multiple copies of three enzymatic components: pyruvate dehydrogenase (E1), dihydrolipoamide acetyltransferase (E2) and lipoamide dehydrogenase (E3). This Rickettsia conorii (strain ATCC VR-613 / Malish 7) protein is Dihydrolipoyllysine-residue acetyltransferase component of pyruvate dehydrogenase complex (pdhC).